Reading from the N-terminus, the 665-residue chain is Dual specificity protein phosphatase 16 (665 aa).

The Rhodanese domain maps to 22-137; the sequence is GTEKVLLIDS…FSRCFPGLCE (116 aa). A (Microbial infection) N6-acetyllysine; by EIS modification is found at K55. A Tyrosine-protein phosphatase domain is found at 158 to 300; it reads GPTRILPNLY…LLDYEKKIKN (143 aa). C244 (phosphocysteine intermediate) is an active-site residue. Positions 321–368 are disordered; that stretch reads EPVPAVSEGGQKSETPLSPPCADSATSEAAGQRPVHPASVPSVPSVQP. Low complexity predominate over residues 354 to 368; the sequence is PVHPASVPSVPSVQP. S446 bears the Phosphoserine; by MAPK1 mark. 2 stretches are compositionally biased toward polar residues: residues 449-458 and 487-499; these read QELSEQTPET and VRTS…QRSL. Disordered stretches follow at residues 449-505 and 597-665; these read QELS…PLHR and VRRR…IEVS. Phosphoserine is present on S501. Residues 602-622 show a composition bias toward basic and acidic residues; that stretch reads KPSDRADSRRSWHEESPFEKQ.

This sequence belongs to the protein-tyrosine phosphatase family. Non-receptor class dual specificity subfamily. As to quaternary structure, interacts with ARRB2. Post-translationally, phosphorylated at Ser-446 by MAPK1/ERK2, which prevents its degradation, and thereby stabilizes it and blocks JNK MAPK activity. In terms of processing, (Microbial infection) Acetylated at Lys-55 by the M.tuberculosis Eis protein; this leads to the inhibition of JNK-dependent autophagy, phagosome maturation, and ROS (reactive oxygen species) generation for enhanced intracellular survival of M.tuberculosis.

It is found in the cytoplasm. It localises to the nucleus. The protein localises to the cytoplasmic vesicle. It carries out the reaction O-phospho-L-tyrosyl-[protein] + H2O = L-tyrosyl-[protein] + phosphate. The catalysed reaction is O-phospho-L-seryl-[protein] + H2O = L-seryl-[protein] + phosphate. It catalyses the reaction O-phospho-L-threonyl-[protein] + H2O = L-threonyl-[protein] + phosphate. Functionally, dual specificity protein phosphatase involved in the inactivation of MAP kinases. Dephosphorylates MAPK10 bound to ARRB2. The chain is Dual specificity protein phosphatase 16 (DUSP16) from Homo sapiens (Human).